The chain runs to 133 residues: Small ribosomal subunit protein uS11 (133 aa).

Belongs to the universal ribosomal protein uS11 family. As to quaternary structure, part of the 30S ribosomal subunit. Interacts with proteins S7 and S18. Binds to IF-3.

Located on the platform of the 30S subunit, it bridges several disparate RNA helices of the 16S rRNA. Forms part of the Shine-Dalgarno cleft in the 70S ribosome. The polypeptide is Small ribosomal subunit protein uS11 (Christiangramia forsetii (strain DSM 17595 / CGMCC 1.15422 / KT0803) (Gramella forsetii)).